The primary structure comprises 63 residues: DNA-directed RNA polymerase 7 kDa subunit (63 aa).

Belongs to the poxviridae DNA-directed RNA polymerase 7 kDa subunit family. As to quaternary structure, the DNA-dependent RNA polymerase (vRNAP) consists of eight subunits encoded by early viral genes and termed according to their apparent molecular masses Rpo147, Rpo132, Rpo35, Rpo30, Rpo22, Rpo19, Rpo18, and Rpo7. The same holoenzyme, with the addition of the transcription-specificity factor RAP94, is used for early gene expression.

The protein resides in the virion. The catalysed reaction is RNA(n) + a ribonucleoside 5'-triphosphate = RNA(n+1) + diphosphate. In terms of biological role, part of the DNA-dependent RNA polymerase which catalyzes the transcription of viral DNA into RNA using the four ribonucleoside triphosphates as substrates. Responsible for the transcription of early, intermediate and late genes. DNA-dependent RNA polymerase associates with the early transcription factor (ETF), itself composed of OPG118 and OPG134, thereby allowing the early genes transcription. Late transcription, and probably also intermediate transcription, require newly synthesized RNA polymerase. The polypeptide is DNA-directed RNA polymerase 7 kDa subunit (OPG090) (Homo sapiens (Human)).